The sequence spans 245 residues: 14-3-3 protein theta (245 aa).

The residue at position 1 (Met1) is an N-acetylmethionine. At Lys3 the chain carries N6-acetyllysine. Lys49 carries the N6-acetyllysine; alternate modification. Lys49 participates in a covalent cross-link: Glycyl lysine isopeptide (Lys-Gly) (interchain with G-Cter in SUMO2); alternate. N6-acetyllysine is present on Lys68. Residue Tyr82 is modified to 3'-nitrotyrosine. Ser92 carries the phosphoserine modification. Tyr104 bears the 3'-nitrotyrosine mark. An N6-acetyllysine modification is found at Lys115. At Ser232 the chain carries Phosphoserine; by CK1.

It belongs to the 14-3-3 family. Homodimer. Interacts with CDK16. Interacts with RGS7 (phosphorylated form). Interacts with SSH1. Interacts with CDKN1B ('Thr-198' phosphorylated form); the interaction translocates CDKN1B to the cytoplasm. Interacts with GAB2. Interacts with the 'Ser-241' phosphorylated form of PDPK1. Interacts with the 'Thr-369' phosphorylated form of DAPK2. Interacts with PI4KB, TBC1D22A and TBC1D22B. Interacts with SLITRK1. Interacts with RIPOR2. Interacts with INAVA; the interaction increases upon PRR (pattern recognition receptor) stimulation and is required for cellular signaling pathway activation and cytokine secretion. Interacts with MARK2, MARK3 and MARK4. Interacts with MEFV.

It is found in the cytoplasm. In terms of biological role, adapter protein implicated in the regulation of a large spectrum of both general and specialized signaling pathways. Binds to a large number of partners, usually by recognition of a phosphoserine or phosphothreonine motif. Binding generally results in the modulation of the activity of the binding partner. Negatively regulates the kinase activity of PDPK1. This Bos taurus (Bovine) protein is 14-3-3 protein theta (YWHAQ).